Here is a 361-residue protein sequence, read N- to C-terminus: G-protein coupled receptor 52 (361 aa).

Topologically, residues Met-1 to Thr-44 are extracellular. 3 N-linked (GlcNAc...) asparagine glycosylation sites follow: Asn-2, Asn-13, and Asn-20. Residues Val-45–Phe-65 form a helical membrane-spanning segment. Residues His-66 to Gln-81 are Cytoplasmic-facing. A helical membrane pass occupies residues Thr-82–Leu-102. Residues His-103–Gln-115 lie on the Extracellular side of the membrane. Cys-114 and Cys-193 are joined by a disulfide. A helical transmembrane segment spans residues Val-116–Ser-136. Topologically, residues Val-137 to Arg-159 are cytoplasmic. The helical transmembrane segment at Ile-160–Trp-180 threads the bilayer. Residues Gly-181–Cys-205 lie on the Extracellular side of the membrane. A helical membrane pass occupies residues Phe-206–Ile-226. The Cytoplasmic portion of the chain corresponds to Phe-227–Met-265. The helical transmembrane segment at Val-266–Leu-286 threads the bilayer. Over Leu-287–Pro-296 the chain is Extracellular. A helical membrane pass occupies residues Thr-297 to Tyr-317. Topologically, residues Ser-318–Ile-361 are cytoplasmic.

Belongs to the G-protein coupled receptor 1 family. In terms of tissue distribution, expressed in brain, especially in striatum. Expressed in the striatum, nucleus accumbens, and lateral globus pallidus.

It is found in the cell membrane. Functionally, G- protein coupled receptor activated by antipsychotics reserpine leading to an increase in intracellular cAMP and its internalization. May play a role in locomotor activity through modulation of dopamine, NMDA and ADORA2A-induced locomotor activity. These behavioral changes are accompanied by modulation of the dopamine receptor signaling pathway in striatum. Modulates HTT level via cAMP-dependent but PKA independent mechanisms throught activation of RAB39B that translocates HTT to the endoplasmic reticulum, thus avoiding proteasome degradation. This chain is G-protein coupled receptor 52, found in Mus musculus (Mouse).